The sequence spans 130 residues: MSLMDPLANALNHVSNCESVGKNVAYLKPASKLIGRVLNVMQDQGYIGNFEYIEDGKAGVYKVDLIGQINKCGAVKPRFAVKNHDFEKFEKRYLPAKGFGLLIVSTPKGLMTHDEARNAGVGGRLISYIY.

Belongs to the universal ribosomal protein uS8 family. Part of the 30S ribosomal subunit.

Its function is as follows. One of the primary rRNA binding proteins, it binds directly to 16S rRNA central domain where it helps coordinate assembly of the platform of the 30S subunit. This is Small ribosomal subunit protein uS8 from Methanococcus maripaludis (strain C7 / ATCC BAA-1331).